We begin with the raw amino-acid sequence, 776 residues long: Kinesin-like protein KLP1 (776 aa).

The 331-residue stretch at 5-335 (AVKVFVRTRP…LRFASRVRTL (331 aa)) folds into the Kinesin motor domain. An ATP-binding site is contributed by 91-98 (GQTGAGKT). The stretch at 348 to 371 (ALLLRRYERQIKELKAELAMRDTL) forms a coiled coil. Positions 441–535 (RRATEEGSGA…SNWGDAGPLS (95 aa)) are disordered. Residues 447 to 460 (GSGAAARGGDSAGP) show a composition bias toward low complexity. Residues 579–657 (ALADTKASIR…SLKSAREELE (79 aa)) are a coiled coil. The segment at 658-776 (PQIQAVAVAR…TQAVNRGLAR (119 aa)) is globular.

This sequence belongs to the TRAFAC class myosin-kinesin ATPase superfamily. Kinesin family.

Its subcellular location is the cytoplasm. It is found in the cytoskeleton. The protein resides in the flagellum axoneme. Functionally, may play a role in rotation or twisting of the central pair microtubules of the flagella axoneme. This chain is Kinesin-like protein KLP1 (KLP1), found in Chlamydomonas reinhardtii (Chlamydomonas smithii).